The following is a 228-amino-acid chain: Aspartate racemase (228 aa).

Residue 47-49 (DRT) coordinates substrate. The active-site Proton donor/acceptor is the cysteine 82. Substrate contacts are provided by residues 83 to 85 (NTA) and lysine 164. Catalysis depends on cysteine 194, which acts as the Proton donor/acceptor.

It belongs to the aspartate/glutamate racemases family. In terms of assembly, homodimer. The existence of the interchain disulfide bond seen in the crystal structures is uncertain, but disulfide bonds have been reported for cytoplasmic proteins from thermophiles.

The catalysed reaction is L-aspartate = D-aspartate. Its activity is regulated as follows. Weakly inhibited by citrate, but not by asparagine. This chain is Aspartate racemase, found in Pyrococcus horikoshii (strain ATCC 700860 / DSM 12428 / JCM 9974 / NBRC 100139 / OT-3).